The sequence spans 172 residues: Large ribosomal subunit protein uL10 (172 aa).

It belongs to the universal ribosomal protein uL10 family. As to quaternary structure, part of the ribosomal stalk of the 50S ribosomal subunit. The N-terminus interacts with L11 and the large rRNA to form the base of the stalk. The C-terminus forms an elongated spine to which L12 dimers bind in a sequential fashion forming a multimeric L10(L12)X complex.

Its function is as follows. Forms part of the ribosomal stalk, playing a central role in the interaction of the ribosome with GTP-bound translation factors. The polypeptide is Large ribosomal subunit protein uL10 (rplJ) (Liberibacter asiaticus (Citrus greening disease)).